The primary structure comprises 356 residues: 5-formaminoimidazole-4-carboxamide-1-(beta)-D-ribofuranosyl 5'-monophosphate synthetase (356 aa).

Residues His-27 and Ser-94 each coordinate 5-amino-1-(5-phospho-beta-D-ribosyl)imidazole-4-carboxamide. One can recognise an ATP-grasp domain in the interval 116–333 (RCLAWESDRE…YSDLIEKGLS (218 aa)). Residues 145-196 (AELI…TRYY) and Glu-226 contribute to the ATP site. Asn-255 is a binding site for 5-amino-1-(5-phospho-beta-D-ribosyl)imidazole-4-carboxamide. Glu-293 and Glu-306 together coordinate Mg(2+).

It belongs to the phosphohexose mutase family. Requires Mg(2+) as cofactor. It depends on Mn(2+) as a cofactor.

It carries out the reaction 5-amino-1-(5-phospho-beta-D-ribosyl)imidazole-4-carboxamide + formate + ATP = 5-formamido-1-(5-phospho-D-ribosyl)imidazole-4-carboxamide + ADP + phosphate. Its pathway is purine metabolism; IMP biosynthesis via de novo pathway; 5-formamido-1-(5-phospho-D-ribosyl)imidazole-4-carboxamide from 5-amino-1-(5-phospho-D-ribosyl)imidazole-4-carboxamide (formate route): step 1/1. In terms of biological role, catalyzes the ATP- and formate-dependent formylation of 5-aminoimidazole-4-carboxamide-1-beta-d-ribofuranosyl 5'-monophosphate (AICAR) to 5-formaminoimidazole-4-carboxamide-1-beta-d-ribofuranosyl 5'-monophosphate (FAICAR) in the absence of folates. In Methanothrix thermoacetophila (strain DSM 6194 / JCM 14653 / NBRC 101360 / PT) (Methanosaeta thermophila), this protein is 5-formaminoimidazole-4-carboxamide-1-(beta)-D-ribofuranosyl 5'-monophosphate synthetase.